The primary structure comprises 521 residues: Bifunctional purine biosynthesis protein PurH (521 aa).

The 145-residue stretch at 1–145 folds into the MGS-like domain; it reads MIKQALISVS…KNHKDVIVIC (145 aa).

It belongs to the PurH family.

The enzyme catalyses (6R)-10-formyltetrahydrofolate + 5-amino-1-(5-phospho-beta-D-ribosyl)imidazole-4-carboxamide = 5-formamido-1-(5-phospho-D-ribosyl)imidazole-4-carboxamide + (6S)-5,6,7,8-tetrahydrofolate. It catalyses the reaction IMP + H2O = 5-formamido-1-(5-phospho-D-ribosyl)imidazole-4-carboxamide. The protein operates within purine metabolism; IMP biosynthesis via de novo pathway; 5-formamido-1-(5-phospho-D-ribosyl)imidazole-4-carboxamide from 5-amino-1-(5-phospho-D-ribosyl)imidazole-4-carboxamide (10-formyl THF route): step 1/1. It functions in the pathway purine metabolism; IMP biosynthesis via de novo pathway; IMP from 5-formamido-1-(5-phospho-D-ribosyl)imidazole-4-carboxamide: step 1/1. The chain is Bifunctional purine biosynthesis protein PurH from Janthinobacterium sp. (strain Marseille) (Minibacterium massiliensis).